A 254-amino-acid chain; its full sequence is Type III pantothenate kinase (254 aa).

6–13 (DVGNTNTV) contributes to the ATP binding site. Substrate contacts are provided by residues tyrosine 100 and 107-110 (GADR). Aspartate 109 functions as the Proton acceptor in the catalytic mechanism. Aspartate 129 is a K(+) binding site. ATP is bound at residue threonine 132. Substrate is bound at residue threonine 184.

The protein belongs to the type III pantothenate kinase family. Homodimer. It depends on NH4(+) as a cofactor. Requires K(+) as cofactor.

Its subcellular location is the cytoplasm. It catalyses the reaction (R)-pantothenate + ATP = (R)-4'-phosphopantothenate + ADP + H(+). The protein operates within cofactor biosynthesis; coenzyme A biosynthesis; CoA from (R)-pantothenate: step 1/5. Its function is as follows. Catalyzes the phosphorylation of pantothenate (Pan), the first step in CoA biosynthesis. This Anaeromyxobacter sp. (strain Fw109-5) protein is Type III pantothenate kinase.